The chain runs to 966 residues: Valine--tRNA ligase (966 aa).

The 'HIGH' region motif lies at 48-58 (PNITGGLHLGH). Positions 348-368 (DYKDARKKIIEECKRLKILED) form a coiled coil. A 'KMSKS' region motif is present at residues 566–570 (KMSKS). Lys569 contributes to the ATP binding site. Residues 939 to 960 (FKKSQEKLNHYNKTKNKLLNQY) adopt a coiled-coil conformation.

This sequence belongs to the class-I aminoacyl-tRNA synthetase family. ValS type 1 subfamily. In terms of assembly, monomer.

It localises to the cytoplasm. It catalyses the reaction tRNA(Val) + L-valine + ATP = L-valyl-tRNA(Val) + AMP + diphosphate. Its function is as follows. Catalyzes the attachment of valine to tRNA(Val). As ValRS can inadvertently accommodate and process structurally similar amino acids such as threonine, to avoid such errors, it has a 'posttransfer' editing activity that hydrolyzes mischarged Thr-tRNA(Val) in a tRNA-dependent manner. This chain is Valine--tRNA ligase, found in Blochmanniella floridana.